Consider the following 193-residue polypeptide: MFEFITDEDERGQVGIGTLIVFIAMVLVAAIAAGVLINTAGYLQSKGSATGEEASAQVSNRINIVSAYGNVNSEKVDYVNLTVRQAAGADNINLTKSTIQWIGPDKATTLTYSSNSPSSLGENFTTESIKGNNADVLVEQSDRIKVIMYASGVSSTLGSGEEVQLTVTTQYGSKTTYWAHVPESLKDKNAVKL.

A propeptide spanning residues 1 to 12 (MFEFITDEDERG) is cleaved from the precursor.

Belongs to the archaeal flagellin family. Post-translationally, glycosylated.

Its subcellular location is the archaeal flagellum. Flagellin is the subunit protein which polymerizes to form the filaments of archaeal flagella. The chain is Flagellin B3 (flaB3) from Halobacterium salinarum (strain ATCC 700922 / JCM 11081 / NRC-1) (Halobacterium halobium).